The primary structure comprises 367 residues: Large ribosomal subunit protein mL38 (367 aa).

A mitochondrion-targeting transit peptide spans 1–29 (MLRRSIHTTKILQKPNATSHIWSDFTTRP).

The protein belongs to the phosphatidylethanolamine-binding protein family. Mitochondrion-specific ribosomal protein mL38 subfamily. As to quaternary structure, component of the mitochondrial large ribosomal subunit (mt-LSU). Mature yeast 74S mitochondrial ribosomes consist of a small (37S) and a large (54S) subunit. The 37S small subunit contains a 15S ribosomal RNA (15S mt-rRNA) and 34 different proteins. The 54S large subunit contains a 21S rRNA (21S mt-rRNA) and 46 different proteins.

Its subcellular location is the mitochondrion. In terms of biological role, component of the mitochondrial ribosome (mitoribosome), a dedicated translation machinery responsible for the synthesis of mitochondrial genome-encoded proteins, including at least some of the essential transmembrane subunits of the mitochondrial respiratory chain. The mitoribosomes are attached to the mitochondrial inner membrane and translation products are cotranslationally integrated into the membrane. The protein is Large ribosomal subunit protein mL38 (MRPL35) of Saccharomyces cerevisiae (strain ATCC 204508 / S288c) (Baker's yeast).